The sequence spans 196 residues: Holliday junction branch migration complex subunit RuvA (196 aa).

Residues 1-63 (MINKIYGKVI…ENELKLFGFL (63 aa)) form a domain I region. The interval 64–139 (NSDERETFKS…KLLINNELES (76 aa)) is domain II. A region of interest (flexible linker) is located at residue serine 139. Positions 139-196 (SSLFRFKELEESIVSMGFDRKIVNSKLKEAFNLVEFSNLKDSEKEQFLFKEVLKRMSN) are domain III.

This sequence belongs to the RuvA family. As to quaternary structure, homotetramer. Forms an RuvA(8)-RuvB(12)-Holliday junction (HJ) complex. HJ DNA is sandwiched between 2 RuvA tetramers; dsDNA enters through RuvA and exits via RuvB. An RuvB hexamer assembles on each DNA strand where it exits the tetramer. Each RuvB hexamer is contacted by two RuvA subunits (via domain III) on 2 adjacent RuvB subunits; this complex drives branch migration. In the full resolvosome a probable DNA-RuvA(4)-RuvB(12)-RuvC(2) complex forms which resolves the HJ.

The protein resides in the cytoplasm. Its function is as follows. The RuvA-RuvB-RuvC complex processes Holliday junction (HJ) DNA during genetic recombination and DNA repair, while the RuvA-RuvB complex plays an important role in the rescue of blocked DNA replication forks via replication fork reversal (RFR). RuvA specifically binds to HJ cruciform DNA, conferring on it an open structure. The RuvB hexamer acts as an ATP-dependent pump, pulling dsDNA into and through the RuvAB complex. HJ branch migration allows RuvC to scan DNA until it finds its consensus sequence, where it cleaves and resolves the cruciform DNA. The sequence is that of Holliday junction branch migration complex subunit RuvA from Borreliella afzelii (strain PKo) (Borrelia afzelii).